We begin with the raw amino-acid sequence, 316 residues long: tRNA dimethylallyltransferase (316 aa).

G17–T24 contributes to the ATP binding site. T19–T24 lines the substrate pocket. Interaction with substrate tRNA regions lie at residues D42–L45, Q166–R170, R247–R252, and K280–R287.

Belongs to the IPP transferase family. In terms of assembly, monomer. Mg(2+) is required as a cofactor.

The catalysed reaction is adenosine(37) in tRNA + dimethylallyl diphosphate = N(6)-dimethylallyladenosine(37) in tRNA + diphosphate. Catalyzes the transfer of a dimethylallyl group onto the adenine at position 37 in tRNAs that read codons beginning with uridine, leading to the formation of N6-(dimethylallyl)adenosine (i(6)A). The protein is tRNA dimethylallyltransferase of Cronobacter sakazakii (strain ATCC BAA-894) (Enterobacter sakazakii).